We begin with the raw amino-acid sequence, 248 residues long: ATP synthase subunit a, chloroplastic (248 aa).

4 consecutive transmembrane segments (helical) span residues 34 to 54, 95 to 115, 134 to 154, and 203 to 223; these read LHGQ…IFAL, VPYI…GALI, INVT…AGIS, and VFAL…GLFA.

This sequence belongs to the ATPase A chain family. F-type ATPases have 2 components, CF(1) - the catalytic core - and CF(0) - the membrane proton channel. CF(1) has five subunits: alpha(3), beta(3), gamma(1), delta(1), epsilon(1). CF(0) has four main subunits: a, b, b' and c.

It localises to the plastid. The protein localises to the chloroplast thylakoid membrane. In terms of biological role, key component of the proton channel; it plays a direct role in the translocation of protons across the membrane. This Guillardia theta (Cryptophyte) protein is ATP synthase subunit a, chloroplastic.